A 506-amino-acid chain; its full sequence is Methylthioalkylmalate synthase 2, chloroplastic (506 aa).

The N-terminal 49 residues, 1 to 49 (MASSLLTSSGMIPTTGSTVVGRSVLPFQSSLHSLRLTHSYKNPALFISC), are a transit peptide targeting the chloroplast. A Pyruvate carboxyltransferase domain is found at 85-359 (VRVFDTTLRD…YTRIDTRQIM (275 aa)).

The protein belongs to the alpha-IPM synthase/homocitrate synthase family.

Its subcellular location is the plastid. It localises to the chloroplast. It carries out the reaction an omega-(methylsulfanyl)-2-oxoalkanoate + acetyl-CoA + H2O = a 2-(omega-methylsulfanyl)alkylmalate + CoA + H(+). In terms of biological role, catalyzes only the first methionine chain elongation cycle. The polypeptide is Methylthioalkylmalate synthase 2, chloroplastic (MAM2) (Arabidopsis thaliana (Mouse-ear cress)).